The following is a 250-amino-acid chain: Tryptophan synthase alpha chain (250 aa).

Catalysis depends on proton acceptor residues Glu-31 and Asp-42.

It belongs to the TrpA family. In terms of assembly, tetramer of two alpha and two beta chains.

The catalysed reaction is (1S,2R)-1-C-(indol-3-yl)glycerol 3-phosphate + L-serine = D-glyceraldehyde 3-phosphate + L-tryptophan + H2O. It functions in the pathway amino-acid biosynthesis; L-tryptophan biosynthesis; L-tryptophan from chorismate: step 5/5. In terms of biological role, the alpha subunit is responsible for the aldol cleavage of indoleglycerol phosphate to indole and glyceraldehyde 3-phosphate. The protein is Tryptophan synthase alpha chain of Staphylococcus carnosus (strain TM300).